The following is an 89-amino-acid chain: MISIDLTLKYTPIPISVQRKESEAAEALYQEIITAMRSPSPIVLELTCEKQTEKKVAVMSDQISGVIVSQKDGAAATGRAPGFFSAAES.

It belongs to the UPF0367 family.

The sequence is that of UPF0367 protein PCC8801_1959 from Rippkaea orientalis (strain PCC 8801 / RF-1) (Cyanothece sp. (strain PCC 8801)).